The chain runs to 511 residues: Adenosine deaminase 2 (511 aa).

Positions 1–29 (MLVDGPSERPALCFLLLAVAMSFFGSALS) are cleaved as a signal peptide. The dimerization stretch occupies residues 30–100 (IDETRAHLLL…HLIERSQVFN (71 aa)). Positions 112 and 114 each coordinate Zn(2+). Asp115 serves as a coordination point for substrate. An N-linked (GlcNAc...) asparagine glycan is attached at Asn127. Residues 127–185 (NVTYRPHCHICFTPRGIMQFRFAHPTPRPSEKCSKWILLEDYRKRVQNVTEFDDSLLRN) form a PRB domain region. Cys137 and Cys159 are joined by a disulfide. N-linked (GlcNAc...) asparagine glycans are attached at residues Asn174 and Asn185. Substrate contacts are provided by residues 204–211 (WSKFETIF), His293, and Gly326. His356 contacts Zn(2+). Catalysis depends on Glu359, which acts as the Proton donor. Asn378 is a glycosylation site (N-linked (GlcNAc...) asparagine). Residue His384 is the Proton acceptor of the active site. Residue Asp441 coordinates Zn(2+). Asp442 contributes to the substrate binding site.

The protein belongs to the metallo-dependent hydrolases superfamily. Adenosine and AMP deaminases family. ADGF subfamily. As to quaternary structure, homodimer. Interacts with adenosine receptors. Binds heparin. Zn(2+) is required as a cofactor. As to expression, detected in blood plasma (at protein level). Widely expressed, with most abundant expression in human adult heart, lung, lymphoblasts, and placenta as well as fetal lung, liver, and kidney. In embryo, expressed in the outflow tract and atrium of the developing heart, the VII/VIII cranial nerve ganglion, and the notochord.

The protein resides in the secreted. The catalysed reaction is adenosine + H2O + H(+) = inosine + NH4(+). Its function is as follows. Adenosine deaminase that may contribute to the degradation of extracellular adenosine, a signaling molecule that controls a variety of cellular responses. Requires elevated adenosine levels for optimal enzyme activity. Binds to cell surfaces via proteoglycans and may play a role in the regulation of cell proliferation and differentiation, independently of its enzyme activity. The sequence is that of Adenosine deaminase 2 from Homo sapiens (Human).